Consider the following 79-residue polypeptide: Exodeoxyribonuclease 7 small subunit (79 aa).

Belongs to the XseB family. Heterooligomer composed of large and small subunits.

It is found in the cytoplasm. The catalysed reaction is Exonucleolytic cleavage in either 5'- to 3'- or 3'- to 5'-direction to yield nucleoside 5'-phosphates.. In terms of biological role, bidirectionally degrades single-stranded DNA into large acid-insoluble oligonucleotides, which are then degraded further into small acid-soluble oligonucleotides. This Syntrophus aciditrophicus (strain SB) protein is Exodeoxyribonuclease 7 small subunit.